Here is a 410-residue protein sequence, read N- to C-terminus: Na(+)-translocating NADH-quinone reductase subunit B (410 aa).

The next 3 membrane-spanning stretches (helical) occupy residues Met56 to Gly76, Leu119 to Trp139, and Ser159 to Ile179. FMN phosphoryl threonine is present on Thr232. 5 consecutive transmembrane segments (helical) span residues Gly266 to Ala286, Ile293 to Ser313, Met318 to Phe338, Ser347 to Ile367, and Gly377 to Ala397.

It belongs to the NqrB/RnfD family. Composed of six subunits; NqrA, NqrB, NqrC, NqrD, NqrE and NqrF. It depends on FMN as a cofactor.

It is found in the cell inner membrane. It carries out the reaction a ubiquinone + n Na(+)(in) + NADH + H(+) = a ubiquinol + n Na(+)(out) + NAD(+). Its function is as follows. NQR complex catalyzes the reduction of ubiquinone-1 to ubiquinol by two successive reactions, coupled with the transport of Na(+) ions from the cytoplasm to the periplasm. NqrA to NqrE are probably involved in the second step, the conversion of ubisemiquinone to ubiquinol. This Neisseria meningitidis serogroup A / serotype 4A (strain DSM 15465 / Z2491) protein is Na(+)-translocating NADH-quinone reductase subunit B.